A 365-amino-acid chain; its full sequence is GDSL esterase/lipase At3g62280 (365 aa).

The signal sequence occupies residues 1–25; sequence MDYTVSSLQCFFLVLCLSLLVCSNS. Ser-43 (nucleophile) is an active-site residue. Asn-137, Asn-178, and Asn-231 each carry an N-linked (GlcNAc...) asparagine glycan. Residues Asp-333 and His-336 contribute to the active site.

It belongs to the 'GDSL' lipolytic enzyme family.

Its subcellular location is the secreted. This Arabidopsis thaliana (Mouse-ear cress) protein is GDSL esterase/lipase At3g62280.